Here is a 453-residue protein sequence, read N- to C-terminus: tRNA modification GTPase MnmE (453 aa).

Arginine 28, glutamate 86, and lysine 125 together coordinate (6S)-5-formyl-5,6,7,8-tetrahydrofolate. Residues 221–375 (GIKIAIVGEP…LIKYLEETSL (155 aa)) enclose the TrmE-type G domain. Asparagine 231 contacts K(+). Residues 231 to 236 (NAGKSS), 250 to 256 (TNIPGTT), and 276 to 279 (DTAG) contribute to the GTP site. Serine 235 serves as a coordination point for Mg(2+). The K(+) site is built by threonine 250, isoleucine 252, and threonine 255. Position 256 (threonine 256) interacts with Mg(2+). Residue lysine 453 coordinates (6S)-5-formyl-5,6,7,8-tetrahydrofolate.

This sequence belongs to the TRAFAC class TrmE-Era-EngA-EngB-Septin-like GTPase superfamily. TrmE GTPase family. In terms of assembly, homodimer. Heterotetramer of two MnmE and two MnmG subunits. The cofactor is K(+).

The protein resides in the cytoplasm. Its function is as follows. Exhibits a very high intrinsic GTPase hydrolysis rate. Involved in the addition of a carboxymethylaminomethyl (cmnm) group at the wobble position (U34) of certain tRNAs, forming tRNA-cmnm(5)s(2)U34. The chain is tRNA modification GTPase MnmE from Mycoplasmoides gallisepticum (strain R(low / passage 15 / clone 2)) (Mycoplasma gallisepticum).